A 264-amino-acid polypeptide reads, in one-letter code: Leukocyte receptor cluster member 1 (264 aa).

Disordered regions lie at residues 1–37 and 49–76; these read MNIL…RERR and FLRK…SGPV. Over residues 12-37 the composition is skewed to basic and acidic residues; sequence RNKDNVARVRRDEAQAREEEKERERR. Residues 16-46 adopt a coiled-coil conformation; the sequence is NVARVRRDEAQAREEEKERERRVLLAQQEAR. Ser-59 bears the Phosphoserine mark. The segment covering 59 to 75 has biased composition (low complexity); the sequence is SLPELEAAEAGAPGSGP. Positions 89–115 form a coiled coil; it reads VIRGNKEYKEEKRQEKERQEKALGILT. The segment at 118–264 is disordered; the sequence is GQSAAEAQTQ…PRQQDPHLTH (147 aa). 2 stretches are compositionally biased toward basic and acidic residues: residues 146–162 and 170–214; these read PDEK…EMQK and HGGD…RSRA. Residues 196–222 are a coiled coil; the sequence is LDQLRAERLRREAAERSRAEALLARVQ. Residue Ser-245 is modified to Phosphoserine.

The chain is Leukocyte receptor cluster member 1 (LENG1) from Homo sapiens (Human).